We begin with the raw amino-acid sequence, 530 residues long: Tegument protein UL21 homolog (530 aa).

The protein belongs to the alphaherpesvirinae UL21 protein family. As to quaternary structure, interacts (via C-terminus) with UL16.

It is found in the virion tegument. The protein localises to the host cytoplasm. Its subcellular location is the host nucleus. In terms of biological role, may participate in DNA packaging/capsid maturation events. Promotes efficient incorporation of tegument proteins UL46, UL49, and US3 homologs into virions. May also play a role in capsid transport to the trans-Golgi network (TGN). The sequence is that of Tegument protein UL21 homolog from Equus caballus (Horse).